Reading from the N-terminus, the 114-residue chain is Large ribosomal subunit protein uL22 (114 aa).

Belongs to the universal ribosomal protein uL22 family. As to quaternary structure, part of the 50S ribosomal subunit.

This protein binds specifically to 23S rRNA; its binding is stimulated by other ribosomal proteins, e.g. L4, L17, and L20. It is important during the early stages of 50S assembly. It makes multiple contacts with different domains of the 23S rRNA in the assembled 50S subunit and ribosome. Its function is as follows. The globular domain of the protein is located near the polypeptide exit tunnel on the outside of the subunit, while an extended beta-hairpin is found that lines the wall of the exit tunnel in the center of the 70S ribosome. The sequence is that of Large ribosomal subunit protein uL22 from Streptococcus suis (strain 98HAH33).